Consider the following 448-residue polypeptide: MEGSKASSSTMQVSFVCQRCSQPLKLDTSFKILDRVTIQELTAPLLTTAQAKPGESQEEEANSGEEPFIETRQDGVSRRFIPPARMMSTESANSFTLIGEASDGGTMENLSRRLKVTGDLFDIMSGQTDVDHPLCEECTDTLLDQLDTQLNVTENECQNYKRCLEMLEQMNEGDSEQLQRELKELALEEERLIQELEDVEKNRKVVAENLEKVQAEAERLDQEEAQYQREYSEFKRQQLELDDELKSVENQMRYAQMQLDKLKKTNVFNATFHIWHSGQFGTINNFRLGRLPSAPVEWNEINAAWGQTVLLLHALANKMGLKFQRYRLVPYGNHSYLESLTDKSKELPLYCSGGLRFFWDNKFDHAMVAFLDCVQQFKEEVEKGETRFCLPYRMDVEKGKIEDTGGSGGSYSIKTQFNSEEQWTKALKFMLTNLKWGLAWVSSQFYNK.

At M1 the chain carries N-acetylmethionine. Phosphoserine is present on residues S14 and S29. The tract at residues T47–R72 is disordered. A phosphoserine; by AMPK mark is found at S88, S91, and S94. The BH3 motif lies at T106 to S125. The tract at residues L110–C157 is interaction with BCL2 and BCL2L1 isoform Bcl-X(L). T117 carries the post-translational modification Phosphothreonine; by DAPK1. The stretch at D140–V267 forms a coiled coil. The segment at D243–K448 is evolutionary conserved domain (ECD). Glycyl lysine isopeptide (Lys-Gly) (interchain with G-Cter in ubiquitin) cross-links involve residues K400 and K435. Residues W423–K448 form a required for membrane-association region.

It belongs to the beclin family. In terms of assembly, a homodimeric form is proposed to exist; this metastable form readily transits to ATG14- or UVRAG-containing complexes with BECN1:UVRAG being more stable than BECN1:ATG14. Component of the PI3K (PI3KC3/PI3K-III/class III phosphatidylinositol 3-kinase) complex the core of which is composed of the catalytic subunit PIK3C3, the regulatory subunit PIK3R4 and BECN1 associating with additional regulatory/auxiliary subunits to form alternative complex forms. Alternative complex forms containing a fourth regulatory subunit in a mutually exclusive manner are PI3K complex I (PI3KC3-C1) containing ATG14, and PI3K complex II (PI3KC3-C2) containing UVRAG. PI3KC3-C1 displays a V-shaped architecture with PIK3R4 serving as a bridge between PIK3C3 and the ATG14:BECN1 subcomplex. Both, PI3KC3-C1 and PI3KC3-C2, can associate with further regulatory subunits, such as RUBCN, SH3GLB1/Bif-1 and AMBRA1. PI3KC3-C1 probably associates with PIK3CB. Forms a complex with PPP2CA and AMBRA1; AMBRA1 and BECN1 components of the complex regulate MYC stability via different pathways. Component of the complex, at least composed of LRPPRC, BECN1 and BCL2; the interactions prevent BECN1 from forming an autophagy-inducing complex with PIK3C3. Interacts with AMBRA1, GOPC, GRID2. Interacts with BCL2 and BCL2L1 isoform Bcl-X(L); the interaction inhibits BECN1 function in promoting autophagy by interfering with the formation of the PI3K complex. Interacts with cytosolic HMGB1; inhibits the interaction of BECN1 and BCL2 leading to promotion of autophagy. Interacts with USP10, USP13, DAPK1, RAB39A. Interacts with SLAMF1. Interacts with the poly-Gln domain of ATXN3; the interaction causes deubiquitination at Lys-400 and stabilizes BECN1. Interacts with VMP1. Interacts with TRIM5; the interaction causes activation of BECN1 by causing its dissociation from its inhibitors BCL2 and TAB2. Interacts with active ULK1 (phosphorylated on 'Ser-317') and MEFV simultaneously. Interacts with WDR81 and WDR91; negatively regulates the PI3 kinase/PI3K activity associated with endosomal membranes. Interacts with LAPTM4B; competes with EGFR for LAPTM4B binding; regulates EGFR activity. Interacts with TRIM50. Interacts with TRIM16. Interacts with ATG14; this interaction is increased in the absence of TMEM39A. Interacts with WASHC1; preventing interaction with AMBRA1 and the DCX(AMBRA1) complex and subsequent ubiquitination. Interacts with TRIM17. Interacts with BCL2L10/BCL-B (via BH1 domain). Interacts with SH3BGRL. Interacts with IRGM; enhancing BECN1-interacting partners and influencing the composition of the BECN1 complex. Interacts with ARMC3. Interacts with LRPPRC. Phosphorylation at Thr-117 by DAPK1 reduces its interaction with BCL2 and BCL2L1 and promotes induction of autophagy. In response to autophagic stimuli, phosphorylated at serine residues by AMPK in an ATG14-dependent manner, and this phosphorylation is critical for maximally efficient autophagy. In terms of processing, polyubiquitinated by NEDD4, both with 'Lys-11'- and 'Lys-63'-linkages. 'Lys-11'-linked polyubiquitination leads to degradation and is enhanced when the stabilizing interaction partner VPS34 is depleted. Deubiquitinated by USP10 and USP13, leading to stabilize the PIK3C3/VPS34-containing complexes. Polyubiquitinated at Lys-400 with 'Lys-48'-linkages. 'Lys-48'-linked polyubiquitination of Lys-400 leads to degradation. Deubiquitinated by ATXN3, leading to stabilization. Ubiquitinated at Lys-435 via 'Lys-63'-linkage by the DCX(AMBRA1) complex, thereby increasing the association between BECN1 and PIK3C3 to promote PIK3C3 activity. 'Lys-48'-linked ubiquitination by RNF216 leads to proteasomal degradation and autophagy inhibition. Post-translationally, proteolytically processed by caspases including CASP8 and CASP3; the C-terminal fragments lack autophagy-inducing capacity and are proposed to induce apoptosis. Thus the cleavage is proposed to be an determinant to switch from autophagy to apoptosis pathways affecting cellular homeostasis including viral infections and survival of tumor cells.

It localises to the cytoplasm. The protein localises to the golgi apparatus. The protein resides in the trans-Golgi network membrane. It is found in the endosome membrane. Its subcellular location is the endoplasmic reticulum membrane. It localises to the mitochondrion membrane. The protein localises to the cytoplasmic vesicle. The protein resides in the autophagosome. It is found in the mitochondrion. Its subcellular location is the nucleus. Its function is as follows. Plays a central role in autophagy. Acts as a core subunit of the PI3K complex that mediates formation of phosphatidylinositol 3-phosphate; different complex forms are believed to play a role in multiple membrane trafficking pathways: PI3KC3-C1 is involved in initiation of autophagosomes and PI3KC3-C2 in maturation of autophagosomes and endocytosis. Involved in regulation of degradative endocytic trafficking and required for the abscission step in cytokinesis, probably in the context of PI3KC3-C2. Essential for the formation of PI3KC3-C2 but not PI3KC3-C1 PI3K complex forms. Involved in endocytosis. May play a role in antiviral host defense. In terms of biological role, beclin-1-C 35 kDa localized to mitochondria can promote apoptosis; it induces the mitochondrial translocation of BAX and the release of proapoptotic factors. In Rattus norvegicus (Rat), this protein is Beclin-1 (Becn1).